A 121-amino-acid polypeptide reads, in one-letter code: Large ribosomal subunit protein uL14 (121 aa).

This sequence belongs to the universal ribosomal protein uL14 family. As to quaternary structure, part of the 50S ribosomal subunit. Forms a cluster with proteins L3 and L19. In the 70S ribosome, L14 and L19 interact and together make contacts with the 16S rRNA in bridges B5 and B8.

Binds to 23S rRNA. Forms part of two intersubunit bridges in the 70S ribosome. The protein is Large ribosomal subunit protein uL14 of Parasynechococcus marenigrum (strain WH8102).